We begin with the raw amino-acid sequence, 162 residues long: Functional amyloid chaperone FapA (162 aa).

The first 28 residues, 1–28, serve as a signal peptide directing secretion; that stretch reads MSGSSLRIVVPALLVIVGSVPVSLPAHA.

It belongs to the FapA family. Monomer in solution. Interacts with FapC but not FapB in vitro.

The protein localises to the periplasm. An intrinsically disordered chaperone for fibril amyloid FapC that guards against fibrillation within the periplasm. Upon overexpression of the endogenous six-gene locus (fapA-fapF), cells form large clumps during liquid growth, make large amounts of biofilm and produce amyloid fibrils. In Pseudomonas aeruginosa (strain ATCC 15692 / DSM 22644 / CIP 104116 / JCM 14847 / LMG 12228 / 1C / PRS 101 / PAO1), this protein is Functional amyloid chaperone FapA.